Reading from the N-terminus, the 400-residue chain is Mu-type opioid receptor (400 aa).

The Extracellular portion of the chain corresponds to Met-1 to Ile-68. Asn-9, Asn-12, Asn-33, Asn-40, and Asn-48 each carry an N-linked (GlcNAc...) asparagine glycan. Residues Thr-69–Tyr-93 traverse the membrane as a helical segment. The Cytoplasmic segment spans residues Val-94–Asn-106. A helical transmembrane segment spans residues Ile-107 to Leu-131. Residues Met-132 to Cys-142 are Extracellular-facing. An intrachain disulfide couples Cys-142 to Cys-219. A helical transmembrane segment spans residues Lys-143–Val-165. Residues Asp-166–Asn-185 lie on the Cytoplasmic side of the membrane. A Phosphotyrosine modification is found at Tyr-168. The helical transmembrane segment at Ala-186–Met-207 threads the bilayer. Residues Ala-208–Trp-230 lie on the Extracellular side of the membrane. Residues Glu-231–Gly-255 traverse the membrane as a helical segment. Topologically, residues Leu-256–Met-283 are cytoplasmic. A helical membrane pass occupies residues Val-284–Ala-306. Over Leu-307–Thr-314 the chain is Extracellular. A helical transmembrane segment spans residues Phe-315–Tyr-338. The short motif at Asn-334–Tyr-338 is the NPxxY; plays a role in stabilizing the activated conformation of the receptor element. Over Ala-339–Pro-400 the chain is Cytoplasmic. Cys-353 carries the S-palmitoyl cysteine lipid modification. The segment at Asn-364–Asn-386 is disordered. Phosphoserine is present on Ser-365. The residue at position 372 (Thr-372) is a Phosphothreonine. Ser-377 carries the post-translational modification Phosphoserine. At Thr-396 the chain carries Phosphothreonine.

This sequence belongs to the G-protein coupled receptor 1 family. In terms of assembly, forms homooligomers and heterooligomers with other GPCRs, such as OPRD1, OPRK1, OPRL1, NPFFR2, ADRA2A, SSTR2, CNR1 and CCR5 (probably in dimeric forms). Interacts with heterotrimeric G proteins; interaction with a heterotrimeric complex containing GNAI1, GNB1 and GNG2 stabilizes the active conformation of the receptor and increases its affinity for endomorphin-2, the synthetic opioid peptide DAMGO and for morphinan agonists. Interacts with PPL; the interaction disrupts agonist-mediated G-protein activation. Interacts (via C-terminus) with DNAJB4 (via C-terminus). Interacts with calmodulin; the interaction inhibits the constitutive activity of OPRM1; it abolishes basal and attenuates agonist-stimulated G-protein coupling. Interacts with FLNA, PLD2, RANBP9 and WLS and GPM6A. Interacts with RTP4. Interacts with SYP and GNAS. Interacts with RGS9, RGS17, RGS20, RGS4, PPP1R9B and HINT1. In terms of processing, phosphorylated. Differentially phosphorylated in basal and agonist-induced conditions. Agonist-mediated phosphorylation modulates receptor internalization. Phosphorylated by GRK2 in a agonist-dependent manner. Phosphorylation at Tyr-168 requires receptor activation, is dependent on non-receptor protein tyrosine kinase Src and results in a decrease in agonist efficacy by reducing G-protein coupling efficiency. Phosphorylated on tyrosine residues; the phosphorylation is involved in agonist-induced G-protein-independent receptor down-regulation. Phosphorylation at Ser-377 is involved in G-protein-dependent but not beta-arrestin-dependent activation of the ERK pathway. Post-translationally, ubiquitinated. A basal ubiquitination seems not to be related to degradation. Ubiquitination is increased upon formation of OPRM1:OPRD1 oligomers leading to proteasomal degradation; the ubiquitination is diminished by RTP4.

It localises to the cell membrane. It is found in the cell projection. The protein localises to the axon. The protein resides in the perikaryon. Its subcellular location is the dendrite. It localises to the endosome. Receptor for endogenous opioids such as beta-endorphin and endomorphin. Receptor for natural and synthetic opioids including morphine, heroin, DAMGO, fentanyl, etorphine, buprenorphin and methadone. Also activated by enkephalin peptides, such as Met-enkephalin or Met-enkephalin-Arg-Phe, with higher affinity for Met-enkephalin-Arg-Phe. Agonist binding to the receptor induces coupling to an inactive GDP-bound heterotrimeric G-protein complex and subsequent exchange of GDP for GTP in the G-protein alpha subunit leading to dissociation of the G-protein complex with the free GTP-bound G-protein alpha and the G-protein beta-gamma dimer activating downstream cellular effectors. The agonist- and cell type-specific activity is predominantly coupled to pertussis toxin-sensitive G(i) and G(o) G alpha proteins, GNAI1, GNAI2, GNAI3 and GNAO1, and to a lesser extent to pertussis toxin-insensitive G alpha proteins GNAZ and GNA15. They mediate an array of downstream cellular responses, including inhibition of adenylate cyclase activity and both N-type and L-type calcium channels, activation of inward rectifying potassium channels, mitogen-activated protein kinase (MAPK), phospholipase C (PLC), phosphoinositide/protein kinase (PKC), phosphoinositide 3-kinase (PI3K) and regulation of NF-kappa-B. Also couples to adenylate cyclase stimulatory G alpha proteins. The selective temporal coupling to G-proteins and subsequent signaling can be regulated by RGSZ proteins, such as RGS9, RGS17 and RGS4. Phosphorylation by members of the GPRK subfamily of Ser/Thr protein kinases and association with beta-arrestins is involved in short-term receptor desensitization. Beta-arrestins associate with the GPRK-phosphorylated receptor and uncouple it from the G-protein thus terminating signal transduction. The phosphorylated receptor is internalized through endocytosis via clathrin-coated pits which involves beta-arrestins. The activation of the ERK pathway occurs either in a G-protein-dependent or a beta-arrestin-dependent manner and is regulated by agonist-specific receptor phosphorylation. Acts as a class A G-protein coupled receptor (GPCR) which dissociates from beta-arrestin at or near the plasma membrane and undergoes rapid recycling. Receptor down-regulation pathways are varying with the agonist and occur dependent or independent of G-protein coupling. Endogenous ligands induce rapid desensitization, endocytosis and recycling. Heterooligomerization with other GPCRs can modulate agonist binding, signaling and trafficking properties. Involved in neurogenesis. The chain is Mu-type opioid receptor (OPRM1) from Macaca mulatta (Rhesus macaque).